Here is a 98-residue protein sequence, read N- to C-terminus: Venom toxin OcyC11 (98 aa).

The first 20 residues, 1-20 (MKIACTLVLFVMLRCYVNAR), serve as a signal peptide directing secretion.

Contains 4 disulfide bonds. As to expression, expressed by the venom gland.

The protein localises to the secreted. In Opisthacanthus cayaporum (South American scorpion), this protein is Venom toxin OcyC11.